Consider the following 37-residue polypeptide: LKCKNKLVPFLSKTCPEGKNLCYKMTLKKVTPKIKRG.

In terms of assembly, heterotetramer composed of two A and two B chains; non-covalently linked. Does not exist as a complex in the crude venom. Post-translationally, may contain several disulfide bonds. Expressed by the venom gland.

The protein localises to the secreted. Its function is as follows. Hemextin A (monomer): exhibits mild anticoagulant activity. It specifically inhibits the activation of FX (F10) by the TF-FVIIa complex (extrinsic tenase complex (ETC)) by non-competitively inhibiting the enzymatic activity of FVIIa. Hemextin AB complex: specifically inhibits the activation of FX (F10) by the TF-FVIIa complex (extrinsic tenase complex (ETC)) (IC(50)= 100 nM, Ki=25 nM) by non-competitively inhibiting the enzymatic activity of FVIIa. This is Hemextin A from Hemachatus haemachatus (Rinkhals).